The primary structure comprises 523 residues: MSRPYDSMEPKVMDDDMLKVAVGEQGPQEEAGQLAKQEGILFKDVLALQLDFQNILRIDNLWQFENLRKLQLNNNIIERIEGLENLTHLVWLDLSFNNIEAIEGLDTLVNLEDLSLSHNRISKIDSLDPLVNLQVLSLGNNQINNMMNIIYLRRFPCLRTLSLSGNPVSEAEEYKVFIYAYLPDLVYLDFRRVDEQAREVAKMKHQYSIDELKHREALMQIRLEEEQAKQQKLAEHKMAFVEHLNGPFLFDSMYSDDVEGNKLSYLPGVGELLEAYKDKFVIICLNIFEYGLSQQEKRKIELDTFNECIQEAIQENQDQGKLKIAKFEEKHLLNLNAIREESDLFTMEQKLTECNESITELFNTLMILEMQLVEQLEETINVFERNITDLVGLFIENVQSLIAQCRDLENHHHEKLLEIAINTLEKILKGEMDEDLPDDVRALFVDKDTIVNAVGASHDIHLLKIDNREDELVTGVNSWCAHLVDKIHKDEIMRNRKRVKEINQFVDHMQSELDNLECGDIID.

5 LRR repeats span residues 44–65, 66–87, 88–109, 110–131, and 132–153; these read DVLA…WQFE, NLRK…ENLT, HLVW…DTLV, NLED…DPLV, and NLQV…IYLR. Residues 166–204 form the LRRCT domain; sequence NPVSEAEEYKVFIYAYLPDLVYLDFRRVDEQAREVAKMK. Residues 369–393 are a coiled coil; sequence EMQLVEQLEETINVFERNITDLVGL.

Belongs to the DRC3 family. As to quaternary structure, component of the nexin-dynein regulatory complex (N-DRC). Interacts with DRC1. Interacts with TCTE1/DRC5. Interacts with DRC7.

It is found in the cytoplasm. It localises to the cytoskeleton. Its subcellular location is the cilium axoneme. The protein resides in the cell projection. The protein localises to the cilium. It is found in the flagellum axoneme. It localises to the flagellum. Functionally, component of the nexin-dynein regulatory complex (N-DRC) a key regulator of ciliary/flagellar motility which maintains the alignment and integrity of the distal axoneme and regulates microtubule sliding in motile axonemes. The chain is Dynein regulatory complex subunit 3 (Drc3) from Rattus norvegicus (Rat).